The primary structure comprises 166 residues: MTTDTASNGNGAQQAPSLNILAQYVKDLSFENPGAPRSLQARDQAPSININVNVNANPLAENDFDVVLSLNAQAQDGDKVLFNVELAYGGVFRVSGFPQEHMLPLLFIECPRLLFPFARQIVADATRNGGFPPLMIDPIDFAQMFAQRMAEEKVRAQVANSNTTTN.

It belongs to the SecB family. Homotetramer, a dimer of dimers. One homotetramer interacts with 1 SecA dimer.

Its subcellular location is the cytoplasm. Functionally, one of the proteins required for the normal export of preproteins out of the cell cytoplasm. It is a molecular chaperone that binds to a subset of precursor proteins, maintaining them in a translocation-competent state. It also specifically binds to its receptor SecA. The sequence is that of Protein-export protein SecB from Sinorhizobium fredii (strain NBRC 101917 / NGR234).